A 198-amino-acid chain; its full sequence is Superoxide dismutase [Mn], mitochondrial (198 aa).

A Mn(2+)-binding site is contributed by His-26. Tyr-34 bears the 3'-nitrotyrosine mark. An N6-acetyllysine; alternate mark is found at Lys-44 and Lys-51. N6-succinyllysine; alternate occurs at positions 44 and 51. His-74 lines the Mn(2+) pocket. Position 90 is an N6-acetyllysine (Lys-90). N6-acetyllysine; alternate occurs at positions 98 and 106. N6-succinyllysine; alternate occurs at positions 98 and 106. The Mn(2+) site is built by Asp-159 and His-163. Residue Lys-178 is modified to N6-acetyllysine.

Belongs to the iron/manganese superoxide dismutase family. In terms of assembly, homotetramer. It depends on Mn(2+) as a cofactor. In terms of processing, nitrated under oxidative stress. Nitration coupled with oxidation inhibits the catalytic activity. Post-translationally, acetylation at Lys-98 decreases enzymatic activity. Deacetylated by SIRT3 upon exposure to ionizing radiations or after long fasting. Polyubiquitinated; leading to proteasomal degradation. Deubiquitinated by USP36 which increases protein stability.

Its subcellular location is the mitochondrion matrix. The catalysed reaction is 2 superoxide + 2 H(+) = H2O2 + O2. Functionally, destroys superoxide anion radicals which are normally produced within the cells and which are toxic to biological systems. The protein is Superoxide dismutase [Mn], mitochondrial (SOD2) of Macaca fuscata fuscata (Japanese macaque).